We begin with the raw amino-acid sequence, 226 residues long: UPF0173 metal-dependent hydrolase CHY_0920 (226 aa).

This sequence belongs to the UPF0173 family.

This chain is UPF0173 metal-dependent hydrolase CHY_0920, found in Carboxydothermus hydrogenoformans (strain ATCC BAA-161 / DSM 6008 / Z-2901).